The following is a 457-amino-acid chain: G-protein coupled receptor 135 (457 aa).

The disordered stretch occupies residues 1 to 27 (MEEQARPPSRPAASATLPGSAHPGGAA). Over 1–64 (MEEQARPPSR…EAAGSRGPAP (64 aa)) the chain is Extracellular. A glycan (N-linked (GlcNAc...) asparagine) is linked at Asn47. A helical transmembrane segment spans residues 65 to 85 (LLWHGAAVAAQALVLLLIFLL). Over 86–109 (SSLGNCAVMGVIVKHRQLRTVTNA) the chain is Cytoplasmic. The helical transmembrane segment at 110 to 130 (FILSLSLSDLLTALLCLPAAF) threads the bilayer. Residues 131 to 156 (LDLFAPPGDSGPWRSFCAASRFFSSC) are Extracellular-facing. A helical membrane pass occupies residues 157–177 (FGIVSTFSVALISLDRYCAIV). The Cytoplasmic segment spans residues 178-189 (RPPRDKLGRRRA). The helical transmembrane segment at 190 to 210 (LQLLAGAWLAALGFSLPWELL) threads the bilayer. Topologically, residues 211–235 (RAPREPPTPQSFHRCLYRTSPDPAQ) are extracellular. A helical transmembrane segment spans residues 236–256 (LGAAYSVGLVVACYLLPFLLM). Over 257–295 (CFCRYHICKTVRLSDVRVRPMTTYARVLRFFSEVRTATT) the chain is Cytoplasmic. A helical transmembrane segment spans residues 296-316 (VLIMIVFVICCWGPYCFLVLL). Residues 317–329 (AATRQGQTTQAPS) are Extracellular-facing. The helical transmembrane segment at 330–350 (LLNVAAVWLTWANGAINPVIY) threads the bilayer. At 351-457 (AIRNPNISMF…HKSETRDSSI (107 aa)) the chain is on the cytoplasmic side.

It belongs to the G-protein coupled receptor 1 family. Interacts with MTNR1B. Interacts with ARRB1 and ARRB2 in a spontaneous and agonist-independent manner; leading to the internalization of GPR135 in the endosomal compartment.

The protein resides in the cell membrane. The protein localises to the endosome membrane. In terms of biological role, orphan receptor. Has spontaneous activity for beta-arrestin recruitment. Shows a reciprocal regulatory interaction with the melatonin receptor MTNR1B most likely through receptor heteromerization. The protein is G-protein coupled receptor 135 (Gpr135) of Rattus norvegicus (Rat).